The sequence spans 377 residues: Nitric oxide reductase FlRd-NAD(+) reductase (377 aa).

Belongs to the FAD-dependent oxidoreductase family. It depends on FAD as a cofactor.

Its subcellular location is the cytoplasm. The enzyme catalyses 2 reduced [nitric oxide reductase rubredoxin domain] + NAD(+) + H(+) = 2 oxidized [nitric oxide reductase rubredoxin domain] + NADH. Its pathway is nitrogen metabolism; nitric oxide reduction. In terms of biological role, one of at least two accessory proteins for anaerobic nitric oxide (NO) reductase. Reduces the rubredoxin moiety of NO reductase. The sequence is that of Nitric oxide reductase FlRd-NAD(+) reductase from Escherichia fergusonii (strain ATCC 35469 / DSM 13698 / CCUG 18766 / IAM 14443 / JCM 21226 / LMG 7866 / NBRC 102419 / NCTC 12128 / CDC 0568-73).